A 271-amino-acid chain; its full sequence is Putative phosphoenolpyruvate synthase regulatory protein (271 aa).

An ADP-binding site is contributed by 151 to 158 (GVSRSGKT).

It belongs to the pyruvate, phosphate/water dikinase regulatory protein family. PSRP subfamily.

The enzyme catalyses [pyruvate, water dikinase] + ADP = [pyruvate, water dikinase]-phosphate + AMP + H(+). It carries out the reaction [pyruvate, water dikinase]-phosphate + phosphate + H(+) = [pyruvate, water dikinase] + diphosphate. Its function is as follows. Bifunctional serine/threonine kinase and phosphorylase involved in the regulation of the phosphoenolpyruvate synthase (PEPS) by catalyzing its phosphorylation/dephosphorylation. This is Putative phosphoenolpyruvate synthase regulatory protein from Paraburkholderia phytofirmans (strain DSM 17436 / LMG 22146 / PsJN) (Burkholderia phytofirmans).